Reading from the N-terminus, the 213-residue chain is ATP synthase peripheral stalk subunit OSCP, mitochondrial (213 aa).

Residues 1 to 23 constitute a mitochondrion transit peptide; it reads MAAPAVSGFSRQVRCFSTSVVRP. The short motif at 5 to 23 is the SIFI-degron element; the sequence is AVSGFSRQVRCFSTSVVRP. 4 positions are modified to N6-acetyllysine: lysine 54, lysine 60, lysine 70, and lysine 73. The residue at position 90 (lysine 90) is an N6-succinyllysine. Lysine 100 and lysine 158 each carry N6-acetyllysine; alternate. Residues lysine 100 and lysine 158 each carry the N6-succinyllysine; alternate modification. Residues lysine 172, lysine 176, and lysine 192 each carry the N6-acetyllysine modification. Lysine 199 is subject to N6-succinyllysine.

Belongs to the ATPase delta chain family. As to quaternary structure, component of the ATP synthase complex composed at least of ATP5F1A/subunit alpha, ATP5F1B/subunit beta, ATP5MC1/subunit c (homooctomer), MT-ATP6/subunit a, MT-ATP8/subunit 8, ATP5ME/subunit e, ATP5MF/subunit f, ATP5MG/subunit g, ATP5MK/subunit k, ATP5MJ/subunit j, ATP5F1C/subunit gamma, ATP5F1D/subunit delta, ATP5F1E/subunit epsilon, ATP5PF/subunit F6, ATP5PB/subunit b, ATP5PD/subunit d, ATP5PO/subunit OSCP. ATP synthase complex consists of a soluble F(1) head domain (subunits alpha(3) and beta(3)) - the catalytic core - and a membrane F(0) domain - the membrane proton channel (subunits c, a, 8, e, f, g, k and j). These two domains are linked by a central stalk (subunits gamma, delta, and epsilon) rotating inside the F1 region and a stationary peripheral stalk (subunits F6, b, d, and OSCP). In response to mitochondrial stress, the precursor protein is ubiquitinated by the SIFI complex in the cytoplasm before mitochondrial import, leading to its degradation. Within the SIFI complex, UBR4 initiates ubiquitin chain that are further elongated or branched by KCMF1.

The protein localises to the mitochondrion. It localises to the mitochondrion inner membrane. In terms of biological role, subunit OSCP, of the mitochondrial membrane ATP synthase complex (F(1)F(0) ATP synthase or Complex V) that produces ATP from ADP in the presence of a proton gradient across the membrane which is generated by electron transport complexes of the respiratory chain. ATP synthase complex consist of a soluble F(1) head domain - the catalytic core - and a membrane F(1) domain - the membrane proton channel. These two domains are linked by a central stalk rotating inside the F(1) region and a stationary peripheral stalk. During catalysis, ATP synthesis in the catalytic domain of F(1) is coupled via a rotary mechanism of the central stalk subunits to proton translocation. In vivo, can only synthesize ATP although its ATP hydrolase activity can be activated artificially in vitro. Part of the complex F(0) domain. Part of the complex F(0) domain and the peripheric stalk, which acts as a stator to hold the catalytic alpha(3)beta(3) subcomplex and subunit a/ATP6 static relative to the rotary elements. The protein is ATP synthase peripheral stalk subunit OSCP, mitochondrial of Rhinolophus ferrumequinum (Greater horseshoe bat).